The primary structure comprises 483 residues: GTPase Der (483 aa).

EngA-type G domains lie at 3-167 and 212-387; these read FTLA…GEER and LRIA…EIWN. Residues 9 to 16, 56 to 60, 119 to 122, 218 to 225, 265 to 269, and 330 to 333 contribute to the GTP site; these read GRPNVGKS, DTAGL, NKAE, GRPNAGKS, DTAGM, and NKWD. The 85-residue stretch at 388-472 folds into the KH-like domain; sequence RRISTGRLNR…PIRLSLRTSD (85 aa).

Belongs to the TRAFAC class TrmE-Era-EngA-EngB-Septin-like GTPase superfamily. EngA (Der) GTPase family. As to quaternary structure, associates with the 50S ribosomal subunit.

Functionally, GTPase that plays an essential role in the late steps of ribosome biogenesis. The polypeptide is GTPase Der (Brucella ovis (strain ATCC 25840 / 63/290 / NCTC 10512)).